A 264-amino-acid polypeptide reads, in one-letter code: S-adenosylmethionine decarboxylase proenzyme (264 aa).

The active-site Schiff-base intermediate with substrate; via pyruvic acid is serine 112. A Pyruvic acid (Ser); by autocatalysis modification is found at serine 112. Residue histidine 117 is the Proton acceptor; for processing activity of the active site. The active-site Proton donor; for catalytic activity is the cysteine 140.

The protein belongs to the prokaryotic AdoMetDC family. Type 2 subfamily. In terms of assembly, heterooctamer of four alpha and four beta chains arranged as a tetramer of alpha/beta heterodimers. Pyruvate is required as a cofactor. In terms of processing, is synthesized initially as an inactive proenzyme. Formation of the active enzyme involves a self-maturation process in which the active site pyruvoyl group is generated from an internal serine residue via an autocatalytic post-translational modification. Two non-identical subunits are generated from the proenzyme in this reaction, and the pyruvate is formed at the N-terminus of the alpha chain, which is derived from the carboxyl end of the proenzyme. The post-translation cleavage follows an unusual pathway, termed non-hydrolytic serinolysis, in which the side chain hydroxyl group of the serine supplies its oxygen atom to form the C-terminus of the beta chain, while the remainder of the serine residue undergoes an oxidative deamination to produce ammonia and the pyruvoyl group blocking the N-terminus of the alpha chain.

The enzyme catalyses S-adenosyl-L-methionine + H(+) = S-adenosyl 3-(methylsulfanyl)propylamine + CO2. Its pathway is amine and polyamine biosynthesis; S-adenosylmethioninamine biosynthesis; S-adenosylmethioninamine from S-adenosyl-L-methionine: step 1/1. Its function is as follows. Catalyzes the decarboxylation of S-adenosylmethionine to S-adenosylmethioninamine (dcAdoMet), the propylamine donor required for the synthesis of the polyamines spermine and spermidine from the diamine putrescine. This chain is S-adenosylmethionine decarboxylase proenzyme, found in Salmonella dublin (strain CT_02021853).